Reading from the N-terminus, the 603-residue chain is Elongation factor 4 (603 aa).

The region spanning 2–184 (NHIRNFSIIA…AVIARVPPPK (183 aa)) is the tr-type G domain. GTP-binding positions include 14 to 19 (DHGKST) and 131 to 134 (NKMD).

This sequence belongs to the TRAFAC class translation factor GTPase superfamily. Classic translation factor GTPase family. LepA subfamily.

The protein localises to the cell inner membrane. The enzyme catalyses GTP + H2O = GDP + phosphate + H(+). Functionally, required for accurate and efficient protein synthesis under certain stress conditions. May act as a fidelity factor of the translation reaction, by catalyzing a one-codon backward translocation of tRNAs on improperly translocated ribosomes. Back-translocation proceeds from a post-translocation (POST) complex to a pre-translocation (PRE) complex, thus giving elongation factor G a second chance to translocate the tRNAs correctly. Binds to ribosomes in a GTP-dependent manner. The sequence is that of Elongation factor 4 from Polaromonas sp. (strain JS666 / ATCC BAA-500).